Reading from the N-terminus, the 239-residue chain is MKITILSLFPSIITPFFENSIMKKVISKGIISCEVISIRNFSDDKHKRCDDIPYGGGAGMVLKAQPISAALDYVNARSKTTIFVSPSGLKYNQKLAYDLSKKDELVIICGRYEGLDQRIIDLYVDFEISVGDYVLSSGEVAALVIIDSVYRLLEGVINPNSLLEESFSCECGLLEYPHYTRPYEFKGLEVPNVLLSGHHEEIRKWRFMKSIEKTKKNRYDLYLKYLEMRGENDGFNKKN.

S-adenosyl-L-methionine is bound by residues Gly-110 and 130–135 (VGDYVL).

The protein belongs to the RNA methyltransferase TrmD family. In terms of assembly, homodimer.

It localises to the cytoplasm. It catalyses the reaction guanosine(37) in tRNA + S-adenosyl-L-methionine = N(1)-methylguanosine(37) in tRNA + S-adenosyl-L-homocysteine + H(+). Functionally, specifically methylates guanosine-37 in various tRNAs. The sequence is that of tRNA (guanine-N(1)-)-methyltransferase from Borrelia turicatae (strain 91E135).